The following is a 132-amino-acid chain: Phosphoribosyl-AMP cyclohydrolase (132 aa).

Mg(2+) is bound at residue Asp-86. Cys-87 is a binding site for Zn(2+). Mg(2+) is bound by residues Asp-88 and Asp-90. Zn(2+)-binding residues include Cys-103 and Cys-110.

This sequence belongs to the PRA-CH family. Homodimer. It depends on Mg(2+) as a cofactor. The cofactor is Zn(2+).

The protein resides in the cytoplasm. It catalyses the reaction 1-(5-phospho-beta-D-ribosyl)-5'-AMP + H2O = 1-(5-phospho-beta-D-ribosyl)-5-[(5-phospho-beta-D-ribosylamino)methylideneamino]imidazole-4-carboxamide. It participates in amino-acid biosynthesis; L-histidine biosynthesis; L-histidine from 5-phospho-alpha-D-ribose 1-diphosphate: step 3/9. Functionally, catalyzes the hydrolysis of the adenine ring of phosphoribosyl-AMP. The chain is Phosphoribosyl-AMP cyclohydrolase from Clavibacter michiganensis subsp. michiganensis (strain NCPPB 382).